Here is a 276-residue protein sequence, read N- to C-terminus: Formamidopyrimidine-DNA glycosylase (276 aa).

P2 acts as the Schiff-base intermediate with DNA in catalysis. E3 (proton donor) is an active-site residue. The active-site Proton donor; for beta-elimination activity is K60. DNA contacts are provided by H93 and R112. The FPG-type zinc-finger motif lies at N240–P274. The active-site Proton donor; for delta-elimination activity is R264.

It belongs to the FPG family. In terms of assembly, monomer. Zn(2+) serves as cofactor.

It carries out the reaction Hydrolysis of DNA containing ring-opened 7-methylguanine residues, releasing 2,6-diamino-4-hydroxy-5-(N-methyl)formamidopyrimidine.. The catalysed reaction is 2'-deoxyribonucleotide-(2'-deoxyribose 5'-phosphate)-2'-deoxyribonucleotide-DNA = a 3'-end 2'-deoxyribonucleotide-(2,3-dehydro-2,3-deoxyribose 5'-phosphate)-DNA + a 5'-end 5'-phospho-2'-deoxyribonucleoside-DNA + H(+). Involved in base excision repair of DNA damaged by oxidation or by mutagenic agents. Acts as a DNA glycosylase that recognizes and removes damaged bases. Has a preference for oxidized purines, such as 7,8-dihydro-8-oxoguanine (8-oxoG). Has AP (apurinic/apyrimidinic) lyase activity and introduces nicks in the DNA strand. Cleaves the DNA backbone by beta-delta elimination to generate a single-strand break at the site of the removed base with both 3'- and 5'-phosphates. The polypeptide is Formamidopyrimidine-DNA glycosylase (Bacillus anthracis).